We begin with the raw amino-acid sequence, 90 residues long: Transcriptional repressor SdpR (90 aa).

The HTH arsR-type domain occupies 1–87 (MNNVFKAISD…WMLNFINKGD (87 aa)). Positions 39-62 (PSISHHLNILKQAEVISDHRKGQF) form a DNA-binding region, H-T-H motif.

Its subcellular location is the cytoplasm. Functionally, represses the transcription of the sdpIR operon and of several other operons that probably contribute to delaying commitment to sporulation. This Bacillus subtilis (strain 168) protein is Transcriptional repressor SdpR (sdpR).